The primary structure comprises 529 residues: Nuclear protein localization protein 4 homolog 1 (529 aa).

The 138-residue stretch at 129–266 (IQIENQELVN…ITEYSMDRHY (138 aa)) folds into the MPN domain. The segment at 499 to 529 (SGGAVWNCGHCTFQNEAARQDCSMCGLPAAD) adopts a RanBP2-type zinc-finger fold.

Belongs to the NPL4 family. As to quaternary structure, forms a complex composed of ubxn-3, ufd-1, npl-4.1 and cdc-48.1; within the complex, interacts with ufd-1 and ubxn-3. Interacts with ufd-1. Interacts with elc-1/elongin C; the interaction may mediate the interaction between the npl-4-ufd-1-cdc-48 complex and the E3 ubiquitin ligase cul-2 complex.

The protein localises to the cytoplasm. Its subcellular location is the nucleus. In terms of biological role, in association with ufd-1 and ATPase cdc-48.1 and/or cdc-48.2, involved in the cytoplasmic elimination of misfolded proteins exported from the ER. This pathway, known as ERAD, prevents the activation of the unfolded protein response (UPR) caused by the accumulation of misfolded proteins in the ER. During S phase and in association with ufd-1, cdc-48.1 and/or cdc-48.2 and ubxn-3, ensures the degradation of DNA licensing factor cdt-1 after the initiation of DNA replication and thus the disassembly of the DNA replication CGM helicase complex by promoting the dissociation from chromatin of several of its components including cdc-45 and sld-5. Regulates ubxn-3 nuclear localization during S phase. This chain is Nuclear protein localization protein 4 homolog 1, found in Caenorhabditis elegans.